Consider the following 450-residue polypeptide: Hyaluronidase-1 (450 aa).

The first 35 residues, 1-35, serve as a signal peptide directing secretion; that stretch reads MRPFSLEVSLHLPWAMAAHLLPVCTLFLNLLSMTQ. 2 disulfide bridges follow: Cys-58/Cys-348 and Cys-222/Cys-236. Asn-85 carries an N-linked (GlcNAc...) asparagine glycan. The active-site Proton donor is Glu-146. N-linked (GlcNAc...) asparagine glycosylation is found at Asn-231 and Asn-365. Cystine bridges form between Cys-373–Cys-384, Cys-378–Cys-433, and Cys-435–Cys-444. Asn-398 carries an N-linked (GlcNAc...) asparagine glycan. In terms of domain architecture, EGF-like spans 433–444; the sequence is CRCYRGWRGTRC.

It belongs to the glycosyl hydrolase 56 family.

Its subcellular location is the secreted. It localises to the lysosome. It carries out the reaction Random hydrolysis of (1-&gt;4)-linkages between N-acetyl-beta-D-glucosamine and D-glucuronate residues in hyaluronate.. Functionally, may have a role in promoting tumor progression. May block the TGFB1-enhanced cell growth. This is Hyaluronidase-1 (HYAL1) from Bos taurus (Bovine).